The primary structure comprises 155 residues: 3-hydroxyacyl-[acyl-carrier-protein] dehydratase FabZ (155 aa).

Residue His-59 is part of the active site.

Belongs to the thioester dehydratase family. FabZ subfamily.

The protein localises to the cytoplasm. It carries out the reaction a (3R)-hydroxyacyl-[ACP] = a (2E)-enoyl-[ACP] + H2O. Functionally, involved in unsaturated fatty acids biosynthesis. Catalyzes the dehydration of short chain beta-hydroxyacyl-ACPs and long chain saturated and unsaturated beta-hydroxyacyl-ACPs. This chain is 3-hydroxyacyl-[acyl-carrier-protein] dehydratase FabZ, found in Bartonella henselae (strain ATCC 49882 / DSM 28221 / CCUG 30454 / Houston 1) (Rochalimaea henselae).